Consider the following 80-residue polypeptide: Protein FAM229B (80 aa).

Positions 1 to 44 are disordered; that stretch reads MPFQFGTQPRRFPVEGGDSSIELEPGLSSSAACNGKEMSPTRQL.

This sequence belongs to the FAM229 family.

This chain is Protein FAM229B (FAM229B), found in Homo sapiens (Human).